The following is a 466-amino-acid chain: 3-isopropylmalate dehydratase large subunit (466 aa).

[4Fe-4S] cluster contacts are provided by Cys-347, Cys-407, and Cys-410.

It belongs to the aconitase/IPM isomerase family. LeuC type 1 subfamily. As to quaternary structure, heterodimer of LeuC and LeuD. [4Fe-4S] cluster serves as cofactor.

It carries out the reaction (2R,3S)-3-isopropylmalate = (2S)-2-isopropylmalate. It participates in amino-acid biosynthesis; L-leucine biosynthesis; L-leucine from 3-methyl-2-oxobutanoate: step 2/4. In terms of biological role, catalyzes the isomerization between 2-isopropylmalate and 3-isopropylmalate, via the formation of 2-isopropylmaleate. This Shigella flexneri serotype 5b (strain 8401) protein is 3-isopropylmalate dehydratase large subunit.